Reading from the N-terminus, the 724-residue chain is Probable zinc transporter MSC2 (724 aa).

The Cytoplasmic segment spans residues 1-6 (MNLQEL). A helical membrane pass occupies residues 7-27 (LAKVPLLLSYPTIILSSNLIV). Residues 28-58 (PSHNDLISRAASTSAAEYADEKLIFFSTDHA) lie on the Lumenal side of the membrane. A helical transmembrane segment spans residues 59–79 (IRLIFLPTFVASSFNLFAHYF). Over 80 to 90 (NFINYSSRRKY) the chain is Cytoplasmic. Residues 91–111 (YVLFTAIYFLSILTAIFHPIQ) traverse the membrane as a helical segment. The Lumenal portion of the chain corresponds to 112–134 (STCITLLIIKLLTTADESSPKIA). The chain crosses the membrane as a helical span at residues 135–155 (LNFKTILKTFVPFITLTLVIL). At 156 to 174 (RWDPSFDASSGDVNKISTS) the chain is on the cytoplasmic side. The chain crosses the membrane as a helical span at residues 175 to 195 (LAAYALLILTLRYASPLILST). The Lumenal segment spans residues 196–219 (LSSSIGVVSKDTSVAQHSISRNKR). Residues 220–240 (FPLILVLPIFSFVLLYLMTIV) form a helical membrane-spanning segment. At 241 to 244 (NKTY) the chain is on the cytoplasmic side. The chain crosses the membrane as a helical span at residues 245-265 (NIQLLMVFVFFGCLSIFFLSL). Topologically, residues 266-298 (KDLFTEDGNQKKGGQEDEYCRMFDIKYMISYLW) are lumenal. The chain crosses the membrane as a helical span at residues 299 to 319 (LTRFTILLTGIMAIVVHFLSF). Residues 320 to 386 (NEITSSIKTD…KQMALNKDTR (67 aa)) are Cytoplasmic-facing. Residues 387 to 407 (SIFSFLLLNTAFMFVQLLYSF) traverse the membrane as a helical segment. The Lumenal portion of the chain corresponds to 408-417 (RSKSLGLLSD). A helical transmembrane segment spans residues 418 to 438 (SLHMALDCTSLLLGLIAGVLT). Over 439 to 453 (KKPASDKFPFGLNYL) the chain is Cytoplasmic. Residues 454 to 474 (GTLAGFTNGVLLLGIVCGIFV) traverse the membrane as a helical segment. The Lumenal portion of the chain corresponds to 475–491 (EAIERIFNPIHLHATNE). A helical transmembrane segment spans residues 492 to 512 (LLVVATLGLLVNLVGLFAFDH). The Cytoplasmic segment spans residues 513-528 (GAHDHGGTDNENMKGI). The chain crosses the membrane as a helical span at residues 529–549 (FLHILADTLGSVGVVISTLLI). Topologically, residues 550–563 (KLTHWPIFDPIASL) are lumenal. Residues 564–584 (LIGSLILLSALPLLKSTSANI) traverse the membrane as a helical segment. Residues 585 to 724 (LLRLDDKKHN…NSLPLQPIAN (140 aa)) lie on the Cytoplasmic side of the membrane. The tract at residues 614-653 (TPRFWPTESGSSGHSHAHTHSHAENHSHEHHHDQKNGSQE) is disordered. A compositionally biased stretch (basic and acidic residues) spans 634–648 (SHAENHSHEHHHDQK).

The protein belongs to the cation diffusion facilitator (CDF) transporter (TC 2.A.4) family. SLC30A subfamily.

The protein localises to the endoplasmic reticulum membrane. Its subcellular location is the nucleus membrane. Functionally, probably act as a zinc ion transporter moving zinc from the nucleus/endoplasmic reticulum to the cytoplasm. Involved in zinc ion homeostasis and cellular distribution. This chain is Probable zinc transporter MSC2 (MSC2), found in Saccharomyces cerevisiae (strain ATCC 204508 / S288c) (Baker's yeast).